We begin with the raw amino-acid sequence, 818 residues long: IQ and AAA domain-containing protein 1-like (818 aa).

The IQ domain occupies 206-235 (QGQAAVTIQKVWKGYLQRKRTQQDRRMEME). 2 disordered regions span residues 344–377 (QMQENRKKEQEKSKEKGKDEKEKKKGKEEKAKKG) and 458–482 (EERPLRAPKKTPGKKTGKKKEKDLT). Residues 463-476 (RAPKKTPGKKTGKK) show a composition bias toward basic residues. Residue 567–574 (GPSGMGKK) participates in ATP binding. The segment at 795–818 (SMKHRMDQLEAEEAKLDKEKKKRK) is disordered. Residues 798–818 (HRMDQLEAEEAKLDKEKKKRK) are compositionally biased toward basic and acidic residues.

It belongs to the AAA ATPase family.

The sequence is that of IQ and AAA domain-containing protein 1-like (IQCA1L) from Homo sapiens (Human).